The primary structure comprises 515 residues: Lysine--tRNA ligase (515 aa).

2 residues coordinate Mg(2+): E422 and E429.

This sequence belongs to the class-II aminoacyl-tRNA synthetase family. As to quaternary structure, homodimer. Requires Mg(2+) as cofactor.

The protein localises to the cytoplasm. The enzyme catalyses tRNA(Lys) + L-lysine + ATP = L-lysyl-tRNA(Lys) + AMP + diphosphate. In Clostridium acetobutylicum (strain ATCC 824 / DSM 792 / JCM 1419 / IAM 19013 / LMG 5710 / NBRC 13948 / NRRL B-527 / VKM B-1787 / 2291 / W), this protein is Lysine--tRNA ligase.